Here is a 1288-residue protein sequence, read N- to C-terminus: Outer capsid protein lambda-2 (1288 aa).

892-899 (GAAAAGKS) serves as a coordination point for ATP.

It belongs to the orthoreovirus lambda-2 protein family. Interacts with protein mu-NS; in viral inclusions.

The protein localises to the virion. It carries out the reaction a 5'-end diphospho-ribonucleoside in mRNA + GTP + H(+) = a 5'-end (5'-triphosphoguanosine)-ribonucleoside in mRNA + diphosphate. It catalyses the reaction a 5'-end (5'-triphosphoguanosine)-ribonucleoside in mRNA + S-adenosyl-L-methionine = a 5'-end (N(7)-methyl 5'-triphosphoguanosine)-ribonucleoside in mRNA + S-adenosyl-L-homocysteine. Functionally, outer capsid protein involved in mRNA capping. Catalyzes the last 3 enzymatic activities for formation of the 5' cap structure on the viral plus-strand transcripts, namely the RNA guanylyltransferase, RNA-7N- and RNA-2'O-methyltransferase activities. The polypeptide is Outer capsid protein lambda-2 (L2) (Reovirus type 2 (strain D5/Jones) (T2J)).